The following is a 554-amino-acid chain: Glucose-6-phosphate isomerase (554 aa).

The active-site Proton donor is Glu-359. Catalysis depends on residues His-390 and Lys-518.

It belongs to the GPI family.

The protein localises to the cytoplasm. The enzyme catalyses alpha-D-glucose 6-phosphate = beta-D-fructose 6-phosphate. The protein operates within carbohydrate biosynthesis; gluconeogenesis. Its pathway is carbohydrate degradation; glycolysis; D-glyceraldehyde 3-phosphate and glycerone phosphate from D-glucose: step 2/4. Catalyzes the reversible isomerization of glucose-6-phosphate to fructose-6-phosphate. This chain is Glucose-6-phosphate isomerase, found in Ectopseudomonas mendocina (strain ymp) (Pseudomonas mendocina).